We begin with the raw amino-acid sequence, 63 residues long: UPF0434 protein Sde_1297 (63 aa).

The protein belongs to the UPF0434 family.

In Saccharophagus degradans (strain 2-40 / ATCC 43961 / DSM 17024), this protein is UPF0434 protein Sde_1297.